The primary structure comprises 195 residues: E3 ubiquitin-protein ligase ZNRF1 (195 aa).

Over residues 1–10 (MGGKQSSASR) the composition is skewed to polar residues. Disordered regions lie at residues 1–36 (MGGK…HFRA) and 61–84 (PFGL…DSRG). Gly2 is lipidated: N-myristoyl glycine. Over residues 18-29 (VSSDDSAVPPSS) the composition is skewed to low complexity. An RING-type; atypical zinc finger spans residues 152 to 193 (CVICLEELSQGDTIARLPCLCIYHKSCIDSWFEVNRCCPEHP).

It localises to the endosome. Its subcellular location is the lysosome. The protein localises to the membrane. It carries out the reaction S-ubiquitinyl-[E2 ubiquitin-conjugating enzyme]-L-cysteine + [acceptor protein]-L-lysine = [E2 ubiquitin-conjugating enzyme]-L-cysteine + N(6)-ubiquitinyl-[acceptor protein]-L-lysine.. It participates in protein modification; protein ubiquitination. In terms of biological role, E3 ubiquitin-protein ligase that plays a role in neuron cells differentiation. Plays a role in the establishment and maintenance of neuronal transmission and plasticity. The polypeptide is E3 ubiquitin-protein ligase ZNRF1 (znrf1) (Xenopus tropicalis (Western clawed frog)).